A 51-amino-acid chain; its full sequence is Small, acid-soluble spore protein K (51 aa).

The disordered stretch occupies residues M1–L51. The span at N21–R43 shows a compositional bias: basic and acidic residues.

Belongs to the SspK family.

It is found in the spore core. The polypeptide is Small, acid-soluble spore protein K (Shouchella clausii (strain KSM-K16) (Alkalihalobacillus clausii)).